Here is a 71-residue protein sequence, read N- to C-terminus: Putative membrane protein insertion efficiency factor (71 aa).

Belongs to the UPF0161 family.

The protein localises to the cell inner membrane. Functionally, could be involved in insertion of integral membrane proteins into the membrane. The protein is Putative membrane protein insertion efficiency factor of Nitrosospira multiformis (strain ATCC 25196 / NCIMB 11849 / C 71).